The following is a 605-amino-acid chain: Elongation factor 4 (605 aa).

Positions 11 to 193 (KNIRNFSIIA…RLVDVIPAPE (183 aa)) constitute a tr-type G domain. GTP is bound by residues 23 to 28 (DHGKST) and 140 to 143 (NKID).

This sequence belongs to the TRAFAC class translation factor GTPase superfamily. Classic translation factor GTPase family. LepA subfamily.

It localises to the cell inner membrane. The enzyme catalyses GTP + H2O = GDP + phosphate + H(+). Required for accurate and efficient protein synthesis under certain stress conditions. May act as a fidelity factor of the translation reaction, by catalyzing a one-codon backward translocation of tRNAs on improperly translocated ribosomes. Back-translocation proceeds from a post-translocation (POST) complex to a pre-translocation (PRE) complex, thus giving elongation factor G a second chance to translocate the tRNAs correctly. Binds to ribosomes in a GTP-dependent manner. This chain is Elongation factor 4, found in Acinetobacter baylyi (strain ATCC 33305 / BD413 / ADP1).